The primary structure comprises 424 residues: CinA-like protein (424 aa).

It belongs to the CinA family.

The chain is CinA-like protein from Shewanella halifaxensis (strain HAW-EB4).